Consider the following 494-residue polypeptide: Cytochrome P450 2B11 (494 aa).

Residue serine 128 is modified to Phosphoserine; by PKA. Cysteine 436 lines the heme pocket.

The protein belongs to the cytochrome P450 family. It depends on heme as a cofactor.

The protein localises to the endoplasmic reticulum membrane. The protein resides in the microsome membrane. The enzyme catalyses an organic molecule + reduced [NADPH--hemoprotein reductase] + O2 = an alcohol + oxidized [NADPH--hemoprotein reductase] + H2O + H(+). Its function is as follows. Cytochromes P450 are a group of heme-thiolate monooxygenases. In liver microsomes, this enzyme is involved in an NADPH-dependent electron transport pathway. This isozyme seems responsible for metabolism of 2,2',4,4',5,5'-hexachlorobiphenyl. The sequence is that of Cytochrome P450 2B11 (CYP2B11) from Canis lupus familiaris (Dog).